We begin with the raw amino-acid sequence, 509 residues long: tRNA (guanine(37)-N(1))-methyltransferase (509 aa).

Residues histidine 289, 327–328, 355–356, and asparagine 387 each bind S-adenosyl-L-methionine; these read DL and DG. A disordered region spans residues 478–509; that stretch reads TRNPENHEDPPLKRQRTAEAFSDEKTQIVSNT.

Belongs to the class I-like SAM-binding methyltransferase superfamily. TRM5/TYW2 family. In terms of assembly, monomer.

Its subcellular location is the mitochondrion matrix. It localises to the nucleus. The protein localises to the cytoplasm. It catalyses the reaction guanosine(37) in tRNA + S-adenosyl-L-methionine = N(1)-methylguanosine(37) in tRNA + S-adenosyl-L-homocysteine + H(+). In terms of biological role, involved in mitochondrial tRNA methylation. Specifically methylates the N1 position of guanosine-37 in various tRNAs. Methylation is not dependent on the nature of the nucleoside 5' of the target nucleoside. This is the first step in the biosynthesis of wybutosine (yW), a modified base adjacent to the anticodon of tRNAs and required for accurate decoding. The chain is tRNA (guanine(37)-N(1))-methyltransferase from Homo sapiens (Human).